The following is a 1338-amino-acid chain: Centrosomal P4.1-associated protein (1338 aa).

The interval 190-211 is disordered; that stretch reads GLSLLPDDQSQKHRSPGNTTTG. Phosphoserine is present on residues S260 and S316. Residues 319-394 form an alpha/beta-tubulin binding region; sequence VANIEERPIK…FTNAKSKFQK (76 aa). Disordered regions lie at residues 386 to 414, 436 to 479, and 521 to 551; these read TNAK…PLFK, PILK…QTGK, and QGKD…ESES. Residues 400 to 409 are compositionally biased toward polar residues; that stretch reads LVTNQSTSED. Residue S540 is modified to Phosphoserine. The segment covering 541–550 has biased composition (basic and acidic residues); that stretch reads PIRETMKESE. At S589 the chain carries Phosphoserine; by PLK2. Phosphoserine; by PLK2 and PLK4 is present on S595. 3 disordered regions span residues 611-789, 845-865, and 1096-1153; these read HRMS…LSLS, VKRG…TSEL, and YLPM…QGEI. Positions 635–650 are enriched in basic and acidic residues; the sequence is NRSEDLDHTAREKESE. Polar residues predominate over residues 679 to 689; sequence QKSTSENQTEW. The segment covering 717–764 has biased composition (basic and acidic residues); that stretch reads STEDRERGISSREDSPQVCDDKGPFKDTRTQEDKRRDVDLDLSDKDYS. S759 is subject to Phosphoserine. Residues 895–1338 form an interaction with STIL region; that stretch reads QPPGDNARSQ…EGNVLMDTEL (444 aa). Over residues 1140–1149 the composition is skewed to acidic residues; it reads YKEEEEDQDI.

Belongs to the TCP10 family. Forms homodimers. Associates with microtubules plus ends; binds to beta-tubulin subunits exposed on microtubule outer surface at its distal tip; also associates with microtubule lattice. Associated with the gamma-tubulin complex. Interacts with the head domain of EPB41. Interacts with LYST. Interacts with CEP152 (via C-terminus). Interacts with STIL. Forms a complex with STIL and SASS6. Post-translationally, phosphorylation at Ser-589 and Ser-595 by PLK2 is required for procentriole formation and centriole elongation. Phosphorylation by PLK2 oscillates during the cell cycle: it increases at G1/S transition and decreases during the exit from mitosis. Phosphorylation at Ser-595 is also mediated by PLK4 but is not a critical step in PLK4 function in procentriole assembly.

It is found in the cytoplasm. The protein resides in the cytoskeleton. The protein localises to the microtubule organizing center. Its subcellular location is the centrosome. It localises to the centriole. Functionally, plays an important role in cell division and centrosome function by participating in centriole duplication. Inhibits microtubule nucleation from the centrosome. Involved in the regulation of slow processive growth of centriolar microtubules. Acts as a microtubule plus-end tracking protein that stabilizes centriolar microtubules and inhibits microtubule polymerization and extension from the distal ends of centrioles. Required for centriole elongation and for STIL-mediated centriole amplification. Required for the recruitment of CEP295 to the proximal end of new-born centrioles at the centriolar microtubule wall during early S phase in a PLK4-dependent manner. May be involved in the control of centriolar-microtubule growth by acting as a regulator of tubulin release. This Homo sapiens (Human) protein is Centrosomal P4.1-associated protein.